The primary structure comprises 87 residues: Toxin CsEv2 (87 aa).

A signal peptide spans 1–19; it reads MNSLLIITACLFLIGTVWA. The LCN-type CS-alpha/beta domain occupies 20-85; sequence KEGYLVNKST…TYPLPNKSCS (66 aa). Intrachain disulfides connect Cys-31-Cys-84, Cys-35-Cys-60, Cys-44-Cys-65, and Cys-48-Cys-67.

This sequence belongs to the long (4 C-C) scorpion toxin superfamily. Sodium channel inhibitor family. Beta subfamily. Expressed by the venom gland.

It localises to the secreted. In terms of biological role, beta toxins bind voltage-independently at site-4 of sodium channels (Nav) and shift the voltage of activation toward more negative potentials thereby affecting sodium channel activation and promoting spontaneous and repetitive firing. Induces immediate paralysis in crickets after injection, with a total paralysis occurring within 15-30 minutes and lasting for 1-2 hours. Is also lethal to vertebrate (chicks) when injected in very high dosages (more that 100 mg/kg). This chain is Toxin CsEv2, found in Centruroides sculpturatus (Arizona bark scorpion).